A 317-amino-acid chain; its full sequence is ADP-L-glycero-D-manno-heptose-6-epimerase (317 aa).

NADP(+) is bound by residues 10 to 11, 31 to 32, Lys38, Lys53, 76 to 80, and Asn93; these read FI, DD, and QGACS. Catalysis depends on Tyr140, which acts as the Proton acceptor. Lys144 contacts NADP(+). Position 169 (Asn169) interacts with substrate. NADP(+) is bound by residues Ile170 and Lys178. The Proton acceptor role is filled by Lys178. Substrate contacts are provided by residues Ala180, His187, 201 to 204, Arg214, and Tyr278; that span reads FEGC.

It belongs to the NAD(P)-dependent epimerase/dehydratase family. HldD subfamily. Homopentamer. NADP(+) is required as a cofactor.

It catalyses the reaction ADP-D-glycero-beta-D-manno-heptose = ADP-L-glycero-beta-D-manno-heptose. The protein operates within nucleotide-sugar biosynthesis; ADP-L-glycero-beta-D-manno-heptose biosynthesis; ADP-L-glycero-beta-D-manno-heptose from D-glycero-beta-D-manno-heptose 7-phosphate: step 4/4. Functionally, catalyzes the interconversion between ADP-D-glycero-beta-D-manno-heptose and ADP-L-glycero-beta-D-manno-heptose via an epimerization at carbon 6 of the heptose. The protein is ADP-L-glycero-D-manno-heptose-6-epimerase of Nitrosococcus oceani (strain ATCC 19707 / BCRC 17464 / JCM 30415 / NCIMB 11848 / C-107).